The sequence spans 620 residues: uncharacterized protein (620 aa).

The 263-residue stretch at 324–586 folds into the Radical SAM core domain; sequence RRYVTIAIIK…HPWEKGIYPT (263 aa). Residues C338, C342, and C345 each contribute to the [4Fe-4S] cluster site. Residue K552 is modified to N6-(pyridoxal phosphate)lysine.

The protein belongs to the radical SAM superfamily. KamA family. [4Fe-4S] cluster serves as cofactor. Pyridoxal 5'-phosphate is required as a cofactor.

This is an uncharacterized protein from Methanocaldococcus jannaschii (strain ATCC 43067 / DSM 2661 / JAL-1 / JCM 10045 / NBRC 100440) (Methanococcus jannaschii).